Here is a 576-residue protein sequence, read N- to C-terminus: Arginine--tRNA ligase (576 aa).

A 'HIGH' region motif is present at residues 122-132; it reads PNVAKEMHVGH.

Belongs to the class-I aminoacyl-tRNA synthetase family. Monomer.

The protein localises to the cytoplasm. It carries out the reaction tRNA(Arg) + L-arginine + ATP = L-arginyl-tRNA(Arg) + AMP + diphosphate. This Erwinia tasmaniensis (strain DSM 17950 / CFBP 7177 / CIP 109463 / NCPPB 4357 / Et1/99) protein is Arginine--tRNA ligase.